The following is a 163-amino-acid chain: Neurotrophin-3 (163 aa).

The first 3 residues, 1–3, serve as a signal peptide directing secretion; that stretch reads IQS. Residues 4 to 119 constitute a propeptide that is removed on maturation; that stretch reads TSMDQGILTE…VLNRTSRRKR (116 aa). Asn112 is a glycosylation site (N-linked (GlcNAc...) asparagine). Residues 114–133 are disordered; the sequence is TSRRKREGKSHRGEYSVCDS. A compositionally biased stretch (basic and acidic residues) spans 123–133; that stretch reads SHRGEYSVCDS.

This sequence belongs to the NGF-beta family.

The protein resides in the secreted. In terms of biological role, seems to promote the survival of visceral and proprioceptive sensory neurons. This is Neurotrophin-3 (NTF3) from Lichanura trivirgata (Rosy boa).